The following is a 421-amino-acid chain: Gamma-glutamyl phosphate reductase (421 aa).

It belongs to the gamma-glutamyl phosphate reductase family.

The protein localises to the cytoplasm. The catalysed reaction is L-glutamate 5-semialdehyde + phosphate + NADP(+) = L-glutamyl 5-phosphate + NADPH + H(+). It participates in amino-acid biosynthesis; L-proline biosynthesis; L-glutamate 5-semialdehyde from L-glutamate: step 2/2. Functionally, catalyzes the NADPH-dependent reduction of L-glutamate 5-phosphate into L-glutamate 5-semialdehyde and phosphate. The product spontaneously undergoes cyclization to form 1-pyrroline-5-carboxylate. The chain is Gamma-glutamyl phosphate reductase from Brucella melitensis biotype 1 (strain ATCC 23456 / CCUG 17765 / NCTC 10094 / 16M).